The chain runs to 845 residues: Protein translocase subunit SecA 1 (845 aa).

Residues Gln-85, 103-107 (GEGKT), and Asp-492 each bind ATP.

It belongs to the SecA family. Monomer and homodimer. Part of the essential Sec protein translocation apparatus which comprises SecA, SecYEG and auxiliary proteins SecDF. Other proteins may also be involved.

Its subcellular location is the cell membrane. The protein resides in the cytoplasm. The catalysed reaction is ATP + H2O + cellular proteinSide 1 = ADP + phosphate + cellular proteinSide 2.. In terms of biological role, part of the Sec protein translocase complex. Interacts with the SecYEG preprotein conducting channel. Has a central role in coupling the hydrolysis of ATP to the transfer of proteins into and across the cell membrane, serving as an ATP-driven molecular motor driving the stepwise translocation of polypeptide chains across the membrane. This is Protein translocase subunit SecA 1 from Corynebacterium glutamicum (strain ATCC 13032 / DSM 20300 / JCM 1318 / BCRC 11384 / CCUG 27702 / LMG 3730 / NBRC 12168 / NCIMB 10025 / NRRL B-2784 / 534).